The following is a 300-amino-acid chain: MRHFLTLRDCSVDEIHQLLRRATELRDMHRAGHLHQPLQGRVLGMVFEKSSTRTRVSFEAGMAQLGGHALFLSPRDTQLGRGEPVEDTARVVSRMVDAVMIRTFGHDMLERFAGHSAAPVINGLSDLCHPCQLLADLQTFTEHRGPITDRRVAWIGDGNNMCHSWIEAAGLLGFDLHIAAPPGYRPEADILALGGDRVQVFDDAYAAAEGADLVTTDVWASMGQESEQAAREEAFRGFCVTESLMECAGEQALFMHCLPAHRGEEVEAAVLEGPQSVVWDEAENRLHAQKALLEFLMLGY.

Carbamoyl phosphate-binding positions include 51 to 54, Gln-78, Arg-102, and 129 to 132; these read STRT and HPCQ. L-ornithine contacts are provided by residues Asn-160, Asp-217, and 221–222; that span reads SM. Residues 257–258 and Arg-285 each bind carbamoyl phosphate; that span reads CL.

This sequence belongs to the aspartate/ornithine carbamoyltransferase superfamily. OTCase family.

It localises to the cytoplasm. The enzyme catalyses carbamoyl phosphate + L-ornithine = L-citrulline + phosphate + H(+). Its pathway is amino-acid biosynthesis; L-arginine biosynthesis; L-arginine from L-ornithine and carbamoyl phosphate: step 1/3. Functionally, reversibly catalyzes the transfer of the carbamoyl group from carbamoyl phosphate (CP) to the N(epsilon) atom of ornithine (ORN) to produce L-citrulline. The chain is Ornithine carbamoyltransferase from Halorhodospira halophila (strain DSM 244 / SL1) (Ectothiorhodospira halophila (strain DSM 244 / SL1)).